A 60-amino-acid chain; its full sequence is Conotoxin VnMRCL-012 (60 aa).

The first 22 residues, 1–22 (MRCLPVFVILLLLIASAPGVDA), serve as a signal peptide directing secretion. Residues 23–50 (QPKTKYDVPLASRHDFAKKTPKRLSKPR) constitute a propeptide that is removed on maturation.

This sequence belongs to the conotoxin T superfamily. Contains 2 disulfide bonds that can be either 'C1-C3, C2-C4' or 'C1-C4, C2-C3', since these disulfide connectivities have been observed for conotoxins with cysteine framework V (for examples, see AC P0DQQ7 and AC P81755). Expressed by the venom duct.

The protein localises to the secreted. The chain is Conotoxin VnMRCL-012 from Conus ventricosus (Mediterranean cone).